The primary structure comprises 494 residues: Transcription termination factor MTERF4, chloroplastic (494 aa).

The transit peptide at 1 to 54 directs the protein to the chloroplast; the sequence is MMKSLLFSAHPTSLLLPAPRLRRLLRLRAASSASASAPPRADRRSPGTPSRRPS. 2 disordered regions span residues 32 to 61 and 457 to 494; these read SASA…YARP and VEEM…EFVR. The span at 46-56 shows a compositional bias: low complexity; the sequence is PGTPSRRPSSS. Acidic residues-rich tracts occupy residues 457–466 and 473–494; these read VEEMEREDSS and DEVE…EFVR.

Belongs to the mTERF family.

The protein localises to the plastid. It localises to the chloroplast stroma. Transcription termination factor required for processing and steady-state levels of plastid transcripts. Required for splicing of the chloroplastic group II intron. Required for the accumulation of 16S and 23S ribosomes. The sequence is that of Transcription termination factor MTERF4, chloroplastic from Zea mays (Maize).